The chain runs to 369 residues: Chaperone protein DnaJ (369 aa).

The J domain maps to 4 to 69 (SYYEILEVEK…KKRALYDRYG (66 aa)). The CR-type zinc-finger motif lies at 130 to 207 (GCKKTIKVQY…CKGKTYILKD (78 aa)). 8 residues coordinate Zn(2+): Cys-143, Cys-146, Cys-159, Cys-162, Cys-181, Cys-184, Cys-195, and Cys-198. CXXCXGXG motif repeat units lie at residues 143–150 (CESCDGTG), 159–166 (CKQCNGQG), 181–188 (CGACQGKG), and 195–202 (CQACKGKT).

Belongs to the DnaJ family. In terms of assembly, homodimer. The cofactor is Zn(2+).

The protein resides in the cytoplasm. In terms of biological role, participates actively in the response to hyperosmotic and heat shock by preventing the aggregation of stress-denatured proteins and by disaggregating proteins, also in an autonomous, DnaK-independent fashion. Unfolded proteins bind initially to DnaJ; upon interaction with the DnaJ-bound protein, DnaK hydrolyzes its bound ATP, resulting in the formation of a stable complex. GrpE releases ADP from DnaK; ATP binding to DnaK triggers the release of the substrate protein, thus completing the reaction cycle. Several rounds of ATP-dependent interactions between DnaJ, DnaK and GrpE are required for fully efficient folding. Also involved, together with DnaK and GrpE, in the DNA replication of plasmids through activation of initiation proteins. This chain is Chaperone protein DnaJ, found in Helicobacter pylori (strain ATCC 700392 / 26695) (Campylobacter pylori).